The chain runs to 261 residues: Small ribosomal subunit protein uS2 (261 aa).

A disordered region spans residues 223–261 (EGKQGQDDSEDVEKEMADKAAAEDDEEESIEVVVEKSED).

Belongs to the universal ribosomal protein uS2 family.

This chain is Small ribosomal subunit protein uS2, found in Lactobacillus johnsonii (strain CNCM I-12250 / La1 / NCC 533).